The chain runs to 195 residues: GTP-dependent dephospho-CoA kinase (195 aa).

Residues Asp49, Val50, Asp68, Glu127, and Asp150 each contribute to the GTP site.

The protein belongs to the GTP-dependent DPCK family.

It catalyses the reaction 3'-dephospho-CoA + GTP = GDP + CoA + H(+). Its pathway is cofactor biosynthesis; coenzyme A biosynthesis. Its function is as follows. Catalyzes the GTP-dependent phosphorylation of the 3'-hydroxyl group of dephosphocoenzyme A to form coenzyme A (CoA). This chain is GTP-dependent dephospho-CoA kinase, found in Methanosarcina barkeri (strain Fusaro / DSM 804).